Here is a 618-residue protein sequence, read N- to C-terminus: Protein fem-1 homolog C (618 aa).

ANK repeat units lie at residues 2–31 (DLKT…DREV), 40–70 (NGAT…PVEL), 82–111 (EGAP…SVNN), 115–144 (TNST…DLEV), 148–177 (HGHT…DVNR), 181–210 (KGNT…SMEK), and 213–243 (YGMT…GLAE). TPR repeat units follow at residues 245–279 (ISAL…RHSE) and 337–370 (SYYI…QQSN). ANK repeat units follow at residues 482 to 524 (NGFS…DVNS) and 528 to 557 (DDNS…HFDS).

This sequence belongs to the fem-1 family. Component of a CRL2 E3 ubiquitin-protein ligase complex, also named ECS (Elongin BC-CUL2/5-SOCS-box protein) complex.

It participates in protein modification; protein ubiquitination. Substrate-recognition component of a Cul2-RING (CRL2) E3 ubiquitin-protein ligase complex of the DesCEND (destruction via C-end degrons) pathway, which recognizes a C-degron located at the extreme C terminus of target proteins, leading to their ubiquitination and degradation. The C-degron recognized by the DesCEND pathway is usually a motif of less than ten residues and can be present in full-length proteins, truncated proteins or proteolytically cleaved forms. The CRL2(FEM1C) complex specifically recognizes proteins with an arginine at the C-terminus: recognizes and binds proteins ending with -Lys/Arg-Xaa-Arg and -Lys/Arg-Xaa-Xaa-Arg C-degrons, leading to their ubiquitination and degradation. The polypeptide is Protein fem-1 homolog C (Danio rerio (Zebrafish)).